The sequence spans 278 residues: Indole-3-glycerol phosphate synthase (278 aa).

The protein belongs to the TrpC family.

The catalysed reaction is 1-(2-carboxyphenylamino)-1-deoxy-D-ribulose 5-phosphate + H(+) = (1S,2R)-1-C-(indol-3-yl)glycerol 3-phosphate + CO2 + H2O. It participates in amino-acid biosynthesis; L-tryptophan biosynthesis; L-tryptophan from chorismate: step 4/5. The chain is Indole-3-glycerol phosphate synthase from Pseudomonas fluorescens (strain SBW25).